The chain runs to 267 residues: tRNA pseudouridine synthase A (267 aa).

The Nucleophile role is filled by Asp-55. Tyr-111 serves as a coordination point for substrate.

It belongs to the tRNA pseudouridine synthase TruA family.

The catalysed reaction is uridine(38/39/40) in tRNA = pseudouridine(38/39/40) in tRNA. Its function is as follows. Formation of pseudouridine at positions 38, 39 and 40 in the anticodon stem and loop of transfer RNAs. This Thermococcus gammatolerans (strain DSM 15229 / JCM 11827 / EJ3) protein is tRNA pseudouridine synthase A.